Reading from the N-terminus, the 257-residue chain is Leucine-rich repeat-containing protein 3 (257 aa).

The N-terminal stretch at 1-32 is a signal peptide; the sequence is MGTVRPPRPSLLLVSTRESCLFLLFCLHLGAA. In terms of domain architecture, LRRNT spans 33–64; sequence CPQPCRCPDHAGAVAVFCSLRGLQEVPEDIPA. LRR repeat units follow at residues 65–86, 89–110, 114–135, and 136–157; these read NTVL…AFQH, RLRE…TFAG, GLRL…ALGK, and LSAK…QEAL. The chain crosses the membrane as a helical span at residues 205-225; sequence VAMLVTMFGWFAMVIAYVVYY.

It belongs to the LRRC3 family. As to expression, widely expressed; detected in testis, lung, small intestine, breast, brain, heart, bone marrow, placenta, colon, fetal brain, liver, fetal liver, thymus, salivary gland, spinal cord, spleen, trachea and adrenal gland.

Its subcellular location is the membrane. This Homo sapiens (Human) protein is Leucine-rich repeat-containing protein 3 (LRRC3).